The primary structure comprises 175 residues: Chromobox protein homolog hpl-2 (175 aa).

The region spanning 19–78 is the Chromo domain; that stretch reads FMVEKVLDKRTGKAGRDEFLIQWQGFPESDSSWEPRENLQCVEMLDEFEREFSKREKPIR. A disordered region spans residues 71-109; the sequence is SKREKPIRKRHSQKPEPSEDQADPEEDKDEKKETNQNDK. The span at 88–98 shows a compositional bias: acidic residues; sequence SEDQADPEEDK. The span at 99 to 109 shows a compositional bias: basic and acidic residues; the sequence is DEKKETNQNDK. The Chromo 2; shadow subtype domain maps to 115-172; it reads KQLKCIVGLTKGPGELHFLCKFSDDTARLLPAKEVNSRYPSQVIRYYESKLTIQDPKA.

As to quaternary structure, interacts with histone H3 when di-, or tri-methylated at 'Lys-27' (H3K27me2/me3), or tri-methylated at 'Lys-9' (H3K9me3). Interacts with Tar DNA-binding protein homolog tdp-1; interaction may maintain localization of hpl-2 to gene bodies. Interacts with histone H1 his-24, probably via interaction with hpl-1. Interacts with chromobox protein homolog hpl-1. May form homodimers. Interacts (via chromo (shadow subtype) domain) with zinc finger protein lin-13 (via PLVPV motif); the interaction is direct and influences localization of hpl-2 to nuclear foci.

It is found in the nucleus. The protein resides in the chromosome. Its function is as follows. Seems to be involved in transcriptional silencing in heterochromatin-like complexes. Probably does not act as global transcriptional repressor, instead targeting a subset of genes. Involved in RNA processing mediated by Tar DNA-binding protein homolog tdp-1. Plays a role in linking epigenetic regulation with the innate immune response. Involved in the endoplasmic reticulum (ER) stress response via modulation of the unfolded protein response (UPR), acting mainly through the IRE1-XBP1 pathway and perhaps, to a lesser extent, through the autophagy pathway. May act in a common pathway with retinoblastoma-like protein homolog lin-35 and zinc finger protein lin-13 to influence the ER stress response in the intestine. Plays a role in the formation of the vulva and in fertility, acting together with a CoREST-like complex, and chromobox protein homolog hpl-1. Acting in concert with hpl-1 and histone H1 protein his-24, involved in reproduction, somatic gonad development, male tail development and vulval cell fate specification; perhaps as a result of modulating expression of Hox genes mab-5 and egl-5. In vulval cell fate specification may act by repressing transcription, of EGF family gene lin-3 in hypodermal hyp7, and of homeobox lin-39 in vulval precursor cells (VPC). Role in growth and somatic gonad development is antagonized by histone-lysine N-methyltransferase set-2/SET1. Required for larval development, acting redundantly with hpl-1. Plays a role in regulation of the developmentally arrested larval state known as dauer, longevity, and lipid metabolism. The chain is Chromobox protein homolog hpl-2 from Caenorhabditis elegans.